A 126-amino-acid polypeptide reads, in one-letter code: Large ribosomal subunit protein bL12 (126 aa).

The protein belongs to the bacterial ribosomal protein bL12 family. Homodimer. Part of the ribosomal stalk of the 50S ribosomal subunit. Forms a multimeric L10(L12)X complex, where L10 forms an elongated spine to which 2 to 4 L12 dimers bind in a sequential fashion. Binds GTP-bound translation factors.

Forms part of the ribosomal stalk which helps the ribosome interact with GTP-bound translation factors. Is thus essential for accurate translation. The chain is Large ribosomal subunit protein bL12 from Bifidobacterium longum (strain DJO10A).